The chain runs to 151 residues: MTTNTHTLQIEEILELLPHRFPFLLVDRVLDFEEGRFLRAVKNVSVNESFFQGHFPGKPIFPGVLILEAMAQATGILAFKSVGKLEPGELYYFAGIDEARFKRPVVPGDQMIMEVTFEKTRRGLTRFKGVALVDGKVVCEATMMCARSREA.

Residue histidine 54 is part of the active site.

It belongs to the thioester dehydratase family. FabZ subfamily. In terms of assembly, oligomer. In terms of processing, the N-terminus is blocked.

It is found in the cytoplasm. The catalysed reaction is a (3R)-hydroxyacyl-[ACP] = a (2E)-enoyl-[ACP] + H2O. Functionally, involved in unsaturated fatty acids biosynthesis. Catalyzes the dehydration of short chain beta-hydroxyacyl-ACPs and long chain saturated and unsaturated beta-hydroxyacyl-ACPs. This Escherichia coli O9:H4 (strain HS) protein is 3-hydroxyacyl-[acyl-carrier-protein] dehydratase FabZ.